The chain runs to 227 residues: Translation initiation factor 6 (227 aa).

This sequence belongs to the eIF-6 family.

In terms of biological role, binds to the 50S ribosomal subunit and prevents its association with the 30S ribosomal subunit to form the 70S initiation complex. This chain is Translation initiation factor 6, found in Methanococcus maripaludis (strain C5 / ATCC BAA-1333).